The sequence spans 671 residues: UvrABC system protein B (671 aa).

The Helicase ATP-binding domain occupies 26-183 (EGLENGLAHQ…RRLSELQYSR (158 aa)). 39–46 (GVTGSGKT) provides a ligand contact to ATP. The short motif at 92–115 (YYDYYQPEAYVPSSDTFIEKDASV) is the Beta-hairpin element. Residues 431–593 (QVDDLLSEIR…IIPQGLNKKI (163 aa)) form the Helicase C-terminal domain. Positions 631-666 (DQKIRELEAKMYTYAQNLEFEQAAELRDQVHQLRQQ) constitute a UVR domain.

This sequence belongs to the UvrB family. In terms of assembly, forms a heterotetramer with UvrA during the search for lesions. Interacts with UvrC in an incision complex.

It is found in the cytoplasm. Functionally, the UvrABC repair system catalyzes the recognition and processing of DNA lesions. A damage recognition complex composed of 2 UvrA and 2 UvrB subunits scans DNA for abnormalities. Upon binding of the UvrA(2)B(2) complex to a putative damaged site, the DNA wraps around one UvrB monomer. DNA wrap is dependent on ATP binding by UvrB and probably causes local melting of the DNA helix, facilitating insertion of UvrB beta-hairpin between the DNA strands. Then UvrB probes one DNA strand for the presence of a lesion. If a lesion is found the UvrA subunits dissociate and the UvrB-DNA preincision complex is formed. This complex is subsequently bound by UvrC and the second UvrB is released. If no lesion is found, the DNA wraps around the other UvrB subunit that will check the other stand for damage. This Yersinia pestis bv. Antiqua (strain Antiqua) protein is UvrABC system protein B.